Here is a 159-residue protein sequence, read N- to C-terminus: Large ribosomal subunit protein uL10 (159 aa).

Belongs to the universal ribosomal protein uL10 family. As to quaternary structure, part of the ribosomal stalk of the 50S ribosomal subunit. The N-terminus interacts with L11 and the large rRNA to form the base of the stalk. The C-terminus forms an elongated spine to which L12 dimers bind in a sequential fashion forming a multimeric L10(L12)X complex.

Forms part of the ribosomal stalk, playing a central role in the interaction of the ribosome with GTP-bound translation factors. The chain is Large ribosomal subunit protein uL10 (rplJ) from Campylobacter jejuni subsp. jejuni serotype O:2 (strain ATCC 700819 / NCTC 11168).